The following is a 338-amino-acid chain: MSSNFEANNNNNGEKQLVCVTGAGGFIGSWVVKELLIRGYHVRGTARDPADSKNAHLLELEGADERLSLCRADVLDAASLRAAFSGCHGVFHVASPVSNDPDLVPVAVEGTRNVINAAADMGVRRVVFTSSYGAVHMNPNRSPDAVLDETCWSDYEFCKQTDNLYCCAKMMAEMTATEEAAKRGLELAVVVPSMTMGPMLQQTLNFSTNHVARYLMGTKKSYPNAVAAYVDVRDVARAHVLVYERPEARGRYLCIGTVLHRAELLRMLRELFPRYPATAKCEDDGKPMAKPYKFSNQRLKDLGLEFTPLRKSLNEAVLCMQQKGHLPLIYPVPKRAYL.

Residues 22–28 (GAGGFIG), R47, K53, 73–74 (DV), 93–95 (VAS), Y165, K169, 192–195 (PSMT), and S207 contribute to the NADP(+) site. Cysteines 158 and 166 form a disulfide. The active-site Proton donor is K169.

Belongs to the NAD(P)-dependent epimerase/dehydratase family. Dihydroflavonol-4-reductase subfamily. In terms of assembly, interacts with RAC1 in a GTP-dependent manner.

It localises to the cytoplasm. The enzyme catalyses (E)-cinnamaldehyde + NADP(+) + CoA = (E)-cinnamoyl-CoA + NADPH + H(+). It functions in the pathway aromatic compound metabolism; phenylpropanoid biosynthesis. Activated by the small GTPase RAC1. Its function is as follows. Involved in the latter stages of lignin biosynthesis. Catalyzes one of the last steps of monolignol biosynthesis, the conversion of cinnamoyl-CoAs into their corresponding cinnamaldehydes. Probably involved in the formation of lignin in defense responses. This chain is Cinnamoyl-CoA reductase 1, found in Oryza sativa subsp. japonica (Rice).